The sequence spans 347 residues: Merozoite surface protein P12 (347 aa).

The N-terminal stretch at Met-1–Gly-25 is a signal peptide. 6-Cys domains lie at Lys-27–Leu-172 and Lys-175–Ser-305. A glycan (N-linked (GlcNAc...) asparagine) is linked at Asn-28. Cystine bridges form between Cys-31–Cys-53, Cys-67–Cys-138, and Cys-81–Cys-136. N-linked (GlcNAc...) asparagine glycosylation is found at Asn-147, Asn-200, Asn-228, Asn-242, Asn-265, and Asn-322. Disulfide bonds link Cys-179–Cys-211, Cys-225–Cys-286, and Cys-236–Cys-284. Residue Asn-322 is the site of GPI-anchor amidated asparagine attachment. A propeptide spans Ser-323–Leu-347 (removed in mature form).

In terms of assembly, heterodimer; heterodimerizes with PF41. May form an antiparallel heterodimer with PF41. In terms of processing, processed into a soluble form.

The protein localises to the cell surface. It is found in the cell membrane. The sequence is that of Merozoite surface protein P12 (PF12) from Plasmodium falciparum (isolate 3D7).